The following is a 141-amino-acid chain: Large ribosomal subunit protein uL11 (141 aa).

The protein belongs to the universal ribosomal protein uL11 family. As to quaternary structure, part of the ribosomal stalk of the 50S ribosomal subunit. Interacts with L10 and the large rRNA to form the base of the stalk. L10 forms an elongated spine to which L12 dimers bind in a sequential fashion forming a multimeric L10(L12)X complex. Post-translationally, one or more lysine residues are methylated.

Its function is as follows. Forms part of the ribosomal stalk which helps the ribosome interact with GTP-bound translation factors. The polypeptide is Large ribosomal subunit protein uL11 (Bacillus cereus (strain ATCC 10987 / NRS 248)).